Here is a 122-residue protein sequence, read N- to C-terminus: Large ribosomal subunit protein uL14 (122 aa).

It belongs to the universal ribosomal protein uL14 family. In terms of assembly, part of the 50S ribosomal subunit. Forms a cluster with proteins L3 and L19. In the 70S ribosome, L14 and L19 interact and together make contacts with the 16S rRNA in bridges B5 and B8.

Binds to 23S rRNA. Forms part of two intersubunit bridges in the 70S ribosome. The polypeptide is Large ribosomal subunit protein uL14 (Streptococcus agalactiae serotype Ia (strain ATCC 27591 / A909 / CDC SS700)).